A 22-amino-acid chain; its full sequence is Brevinin-1OKd (22 aa).

Lys-22 is modified (lysine amide).

In terms of tissue distribution, expressed by the skin glands.

The protein resides in the secreted. Functionally, antimicrobial peptide. The sequence is that of Brevinin-1OKd from Nidirana okinavana (Kampira Falls frog).